Here is a 317-residue protein sequence, read N- to C-terminus: tRNA dimethylallyltransferase (317 aa).

14–21 is a binding site for ATP; sequence GPTAVGKT. 16–21 serves as a coordination point for substrate; the sequence is TAVGKT. The tract at residues 39-42 is interaction with substrate tRNA; the sequence is DSMQ.

Belongs to the IPP transferase family. In terms of assembly, monomer. Requires Mg(2+) as cofactor.

The enzyme catalyses adenosine(37) in tRNA + dimethylallyl diphosphate = N(6)-dimethylallyladenosine(37) in tRNA + diphosphate. In terms of biological role, catalyzes the transfer of a dimethylallyl group onto the adenine at position 37 in tRNAs that read codons beginning with uridine, leading to the formation of N6-(dimethylallyl)adenosine (i(6)A). The protein is tRNA dimethylallyltransferase of Bacillus cereus (strain B4264).